Reading from the N-terminus, the 189-residue chain is Peptidyl-tRNA hydrolase (189 aa).

Tyr14 lines the tRNA pocket. His19 functions as the Proton acceptor in the catalytic mechanism. 3 residues coordinate tRNA: Tyr64, Asn66, and Asn112.

The protein belongs to the PTH family. As to quaternary structure, monomer.

The protein resides in the cytoplasm. It catalyses the reaction an N-acyl-L-alpha-aminoacyl-tRNA + H2O = an N-acyl-L-amino acid + a tRNA + H(+). Functionally, hydrolyzes ribosome-free peptidyl-tRNAs (with 1 or more amino acids incorporated), which drop off the ribosome during protein synthesis, or as a result of ribosome stalling. In terms of biological role, catalyzes the release of premature peptidyl moieties from peptidyl-tRNA molecules trapped in stalled 50S ribosomal subunits, and thus maintains levels of free tRNAs and 50S ribosomes. This is Peptidyl-tRNA hydrolase from Clostridium botulinum (strain Kyoto / Type A2).